Here is a 300-residue protein sequence, read N- to C-terminus: Flaviolin linalyltransferase (300 aa).

The protein belongs to the aromatic prenyltransferase family. In terms of assembly, monomer.

The catalysed reaction is flaviolin + (2E)-geranyl diphosphate = 3-linalylflaviolin + diphosphate. With respect to regulation, does not require magnesium or any other divalent metal ions for activity. In terms of biological role, involved in the biosynthesis of furanonaphthoquinone I (FNQ I). Catalyzes C- and O-prenylations of different phenolic substrates. With flaviolin as substrate, catalyzes the formation of a carbon-carbon-bond between C-3 (rather than C-1) of geranyl diphosphate and C-3 of flaviolin. With 1,3-dihydroxynaphthalene and 4-hydroxybenzoate as substrates, catalyzes O-prenylations. This chain is Flaviolin linalyltransferase, found in Streptomyces virginiae (Streptomyces cinnamonensis).